The chain runs to 507 residues: UDP-glycosyltransferase 73D1 (507 aa).

UDP-alpha-D-glucose is bound by residues Ser298, 359-361 (SPQ), 376-384 (HCGWNSTIE), and 398-401 (FAEQ).

It belongs to the UDP-glycosyltransferase family.

The protein is UDP-glycosyltransferase 73D1 (UGT73D1) of Arabidopsis thaliana (Mouse-ear cress).